The following is a 205-amino-acid chain: Ras-related and estrogen-regulated growth inhibitor-like protein (205 aa).

The tract at residues 1–205 (MSNFLHLKYN…NVFGKRRKSV (205 aa)) is small GTPase-like. GTP contacts are provided by residues 11 to 18 (EKSVSVTK), 58 to 64 (DPCSQTQ), and 123 to 126 (NKRD).

Belongs to the small GTPase superfamily. Ras family.

It carries out the reaction GTP + H2O = GDP + phosphate + H(+). Functionally, binds GDP/GTP and may possess intrinsic GTPase activity. The protein is Ras-related and estrogen-regulated growth inhibitor-like protein (RERGL) of Homo sapiens (Human).